Reading from the N-terminus, the 111-residue chain is uncharacterized protein (111 aa).

A helical transmembrane segment spans residues 27 to 47 (HLFHFPSISFFFFFFFFFFSF).

It is found in the membrane. This is an uncharacterized protein from Saccharomyces cerevisiae (strain ATCC 204508 / S288c) (Baker's yeast).